The sequence spans 454 residues: MISLFDMFKVGIGPSSSHTVGPMKAGKQFVDDLVEKGLLDSVTRVAVDVYGSLSLTGKGHHTDIAIIMGLAGNEPATVDIDSIPGFIRDVEERERLLLAQGRHEVDFPRDNGMRFHNGNLPLHENGMQIHAYNGDEVVYSKTYYSIGGGFIVDEEHFGQDAANEVSVPYPFKSATELLAYCNETGYSLSGLAMQNELALHSKKEIDEYFAHVWQTMQACIDRGMNTEGVLPGPLRVPRRASALRRMLVSSDKLSNDPMNVIDWVNMFALAVNEENAAGGRVVTAPTNGACGIVPAVLAYYDHFIESVSPDIYTRYFMAAGAIGALYKMNASISGAEVGCQGEVGVACSMAAAGLAELLGGSPEQVCVAAEIGMEHNLGLTCDPVAGQVQVPCIERNAIASVKAINAARMALRRTSAPRVSLDKVIETMYETGKDMNAKYRETSRGGLAIKVQCD.

The protein belongs to the iron-sulfur dependent L-serine dehydratase family. [4Fe-4S] cluster is required as a cofactor. Post-translationally, activated by post-translational modification by a system involving at least three gene products. Activation is mimicked in vitro by iron and dithiothreitol. There is considerable evidence for a free-radical activation mechanism.

The enzyme catalyses L-serine = pyruvate + NH4(+). It participates in carbohydrate biosynthesis; gluconeogenesis. In terms of biological role, also deaminates threonine, particularly when it is present in high concentration. The sequence is that of L-serine dehydratase 1 (sdaA) from Escherichia coli (strain K12).